Reading from the N-terminus, the 214-residue chain is MIVKQTEFIKSATKPAHYPEGNLPEIAFAGRSNVGKSSLVNVLVNRKNLVRTSSTPGRTQLINFFQVNDDFMLVDLPGYGYAKVPLAVKKEWRPMMETYLSKRRNLRGVVLILDIRRTPTEEDLQMLAWLRAFSVPPIVVITKCDKVSKNERARQSAVIMEKMQLKKEELNYFSALSKEGKDAVWARIDALLSPAAAETTEISGDPAPSAPVND.

The EngB-type G domain maps to 22-194 (NLPEIAFAGR…WARIDALLSP (173 aa)). GTP is bound by residues 30 to 37 (GRSNVGKS), 57 to 61 (GRTQL), 75 to 78 (DLPG), 142 to 145 (TKCD), and 173 to 175 (FSA). 2 residues coordinate Mg(2+): serine 37 and threonine 59.

The protein belongs to the TRAFAC class TrmE-Era-EngA-EngB-Septin-like GTPase superfamily. EngB GTPase family. Mg(2+) serves as cofactor.

Its function is as follows. Necessary for normal cell division and for the maintenance of normal septation. In Citrifermentans bemidjiense (strain ATCC BAA-1014 / DSM 16622 / JCM 12645 / Bem) (Geobacter bemidjiensis), this protein is Probable GTP-binding protein EngB.